A 270-amino-acid chain; its full sequence is 4-hydroxy-tetrahydrodipicolinate reductase (270 aa).

NAD(+)-binding positions include 11 to 16 (GCQGRM) and glutamate 37. Arginine 38 is an NADP(+) binding site. NAD(+) contacts are provided by residues 101–103 (GTT) and 125–128 (ASNF). Histidine 158 acts as the Proton donor/acceptor in catalysis. Histidine 159 contributes to the (S)-2,3,4,5-tetrahydrodipicolinate binding site. The active-site Proton donor is lysine 162. A (S)-2,3,4,5-tetrahydrodipicolinate-binding site is contributed by 168 to 169 (GT).

The protein belongs to the DapB family.

It localises to the cytoplasm. The catalysed reaction is (S)-2,3,4,5-tetrahydrodipicolinate + NAD(+) + H2O = (2S,4S)-4-hydroxy-2,3,4,5-tetrahydrodipicolinate + NADH + H(+). It carries out the reaction (S)-2,3,4,5-tetrahydrodipicolinate + NADP(+) + H2O = (2S,4S)-4-hydroxy-2,3,4,5-tetrahydrodipicolinate + NADPH + H(+). Its pathway is amino-acid biosynthesis; L-lysine biosynthesis via DAP pathway; (S)-tetrahydrodipicolinate from L-aspartate: step 4/4. In terms of biological role, catalyzes the conversion of 4-hydroxy-tetrahydrodipicolinate (HTPA) to tetrahydrodipicolinate. The sequence is that of 4-hydroxy-tetrahydrodipicolinate reductase from Tolumonas auensis (strain DSM 9187 / NBRC 110442 / TA 4).